Here is a 172-residue protein sequence, read N- to C-terminus: Putative methyltransferase Mtx subunit A (172 aa).

Belongs to the MtrA family. May be part of a complex composed of 3 subunits; MtxA, MtxH and MtxX.

This is Putative methyltransferase Mtx subunit A (mtxA) from Methanosarcina mazei (strain ATCC BAA-159 / DSM 3647 / Goe1 / Go1 / JCM 11833 / OCM 88) (Methanosarcina frisia).